A 227-amino-acid polypeptide reads, in one-letter code: LysM and putative peptidoglycan-binding domain-containing protein 1 (227 aa).

A phosphoserine mark is found at Ser23 and Ser33. The LysM domain maps to 40 to 84 (LEHQLEPGDTLAGLALKYGVTMEQIKRTNRLYTNDSIFLKKTLYI). The disordered stretch occupies residues 95–157 (NGLDSEEEEN…PSHDLSASDF (63 aa)). Positions 98–108 (DSEEEENDGEE) are enriched in acidic residues. Ser99 is modified (phosphoserine). Polar residues predominate over residues 143 to 152 (QGTSTPSHDL). 4 positions are modified to phosphoserine: Ser166, Ser181, Ser194, and Ser212. Residues 169 to 227 (KKAAAQKLRKGESGVPEEDTGLYPSSPRMQQRAVLGPVPLTRTSRTQTLRDQEDEIFKL) form a disordered region. Basic and acidic residues predominate over residues 216–227 (TLRDQEDEIFKL).

The polypeptide is LysM and putative peptidoglycan-binding domain-containing protein 1 (Lysmd1) (Rattus norvegicus (Rat)).